Consider the following 169-residue polypeptide: Translationally-controlled tumor protein homolog (169 aa).

The 169-residue stretch at 1 to 169 (MIIYKDIVSG…FKDGLEEEKF (169 aa)) folds into the TCTP domain.

The protein belongs to the TCTP family.

The protein resides in the cytoplasm. In terms of biological role, involved in calcium binding and microtubule stabilization. The protein is Translationally-controlled tumor protein homolog of Branchiostoma belcheri (Amphioxus).